We begin with the raw amino-acid sequence, 120 residues long: NAD(P)H-quinone oxidoreductase subunit 3, chloroplastic (120 aa).

3 helical membrane-spanning segments follow: residues I9 to A29, M64 to M84, and V88 to L108.

This sequence belongs to the complex I subunit 3 family. In terms of assembly, NDH is composed of at least 16 different subunits, 5 of which are encoded in the nucleus.

The protein resides in the plastid. Its subcellular location is the chloroplast thylakoid membrane. It carries out the reaction a plastoquinone + NADH + (n+1) H(+)(in) = a plastoquinol + NAD(+) + n H(+)(out). The catalysed reaction is a plastoquinone + NADPH + (n+1) H(+)(in) = a plastoquinol + NADP(+) + n H(+)(out). In terms of biological role, NDH shuttles electrons from NAD(P)H:plastoquinone, via FMN and iron-sulfur (Fe-S) centers, to quinones in the photosynthetic chain and possibly in a chloroplast respiratory chain. The immediate electron acceptor for the enzyme in this species is believed to be plastoquinone. Couples the redox reaction to proton translocation, and thus conserves the redox energy in a proton gradient. This is NAD(P)H-quinone oxidoreductase subunit 3, chloroplastic from Oryza nivara (Indian wild rice).